The primary structure comprises 179 residues: Large ribosomal subunit protein uL6 (179 aa).

Belongs to the universal ribosomal protein uL6 family. As to quaternary structure, part of the 50S ribosomal subunit.

Functionally, this protein binds to the 23S rRNA, and is important in its secondary structure. It is located near the subunit interface in the base of the L7/L12 stalk, and near the tRNA binding site of the peptidyltransferase center. This Saccharopolyspora erythraea (strain ATCC 11635 / DSM 40517 / JCM 4748 / NBRC 13426 / NCIMB 8594 / NRRL 2338) protein is Large ribosomal subunit protein uL6.